The chain runs to 72 residues: MAFLKKSLFLVLFLGMVSLSICEEEKREEENEQEDDEQSEEKRGMFTNMLKGIGKLAGQAALGAVKTLAGEQ.

Residues Met1 to Cys22 form the signal peptide. Residues Glu23–Glu41 constitute a propeptide that is removed on maturation. The tract at residues Glu24–Arg43 is disordered. The span at Glu30 to Ser39 shows a compositional bias: acidic residues. Alanine amide is present on Ala69. Positions Glu71–Gln72 are excised as a propeptide.

It belongs to the frog skin active peptide (FSAP) family. Dermaseptin subfamily. Expressed by the skin glands.

The protein localises to the secreted. Functionally, possesses a potent antimicrobial activity against Gram-positive and Gram-negative bacteria. Probably acts by disturbing membrane functions with its amphipathic structure. The protein is Dermaseptin-A4 of Agalychnis annae (Blue-sided leaf frog).